The primary structure comprises 880 residues: Calcium-transporting ATPase lmo0841 (880 aa).

A run of 4 helical transmembrane segments spans residues 47-67, 68-88, 243-263, and 271-291; these read LWKL…VIAA, LVQL…VLIV, LGLG…GRVL, and MATA…AAIP. Ca(2+)-binding residues include valine 287, alanine 288, isoleucine 290, and glutamate 292. Residue aspartate 334 is the 4-aspartylphosphate intermediate of the active site. The next 5 membrane-spanning stretches (helical) occupy residues 681 to 701, 707 to 727, 756 to 776, 819 to 839, and 854 to 874; these read IAYL…ALVL, FTAL…AIAL, AVIS…YIGM, YVIG…LPGA, and WSIA…IKVV. The Ca(2+) site is built by asparagine 716 and aspartate 720.

This sequence belongs to the cation transport ATPase (P-type) (TC 3.A.3) family. Type IIA subfamily.

The protein localises to the cell membrane. The catalysed reaction is Ca(2+)(in) + ATP + H2O = Ca(2+)(out) + ADP + phosphate + H(+). Phosphorylation is inhibited by EGTA and vanadate. ATPase activity is stimulated by Sr(2+). Inhibited by very high concentrations of cyclopiazonic acid (CPA). In terms of biological role, catalyzes the hydrolysis of ATP coupled with the transport of calcium. The transport is electrogenic with a probable ATP:Ca(2+):H(+) stoichiometry of 1:1:1. May have an important role in survival of the bacterium when stressed by a combination of a high calcium concentration and alkaline pH. The polypeptide is Calcium-transporting ATPase lmo0841 (Listeria monocytogenes serovar 1/2a (strain ATCC BAA-679 / EGD-e)).